The following is a 204-amino-acid chain: Putative peptidase PfaP (204 aa).

The signal sequence occupies residues 1-27; the sequence is MRLRKTRKIVVSMKDMAASGGYYIASS. The Nucleophile role is filled by Ser19. Residue Lys70 is the Proton donor/acceptor of the active site.

It belongs to the peptidase S49 family.

Its function is as follows. Possible protease. May be involved in export of periplasmic flagella proteins. This Leptospira borgpetersenii protein is Putative peptidase PfaP (pfaP).